Reading from the N-terminus, the 347-residue chain is NADH-quinone oxidoreductase subunit H (347 aa).

8 consecutive transmembrane segments (helical) span residues 25–45, 95–115, 128–148, 168–188, 200–220, 251–271, 284–304, and 324–344; these read ILFM…VAAM, FMFT…FAII, IGIL…LFGG, ISYE…TGSF, GWYI…GVAV, FFIG…CLFF, FIPP…MFVL, and VCLP…LIFS.

The protein belongs to the complex I subunit 1 family. NDH-1 is composed of 14 different subunits. Subunits NuoA, H, J, K, L, M, N constitute the membrane sector of the complex.

It is found in the cell inner membrane. The catalysed reaction is a quinone + NADH + 5 H(+)(in) = a quinol + NAD(+) + 4 H(+)(out). Its function is as follows. NDH-1 shuttles electrons from NADH, via FMN and iron-sulfur (Fe-S) centers, to quinones in the respiratory chain. The immediate electron acceptor for the enzyme in this species is believed to be ubiquinone. Couples the redox reaction to proton translocation (for every two electrons transferred, four hydrogen ions are translocated across the cytoplasmic membrane), and thus conserves the redox energy in a proton gradient. This subunit may bind ubiquinone. This is NADH-quinone oxidoreductase subunit H from Psychrobacter cryohalolentis (strain ATCC BAA-1226 / DSM 17306 / VKM B-2378 / K5).